Consider the following 104-residue polypeptide: DNA-directed RNA polymerase subunit Rpo13 (104 aa).

2 disordered regions span residues M1 to F33 and R78 to G104. Positions T7–D31 are enriched in acidic residues. Residues S80 to G104 are compositionally biased toward basic residues.

Belongs to the archaeal Rpo13 RNA polymerase subunit family. In terms of assembly, part of the 13-subunit RNA polymerase complex.

Its subcellular location is the cytoplasm. The enzyme catalyses RNA(n) + a ribonucleoside 5'-triphosphate = RNA(n+1) + diphosphate. DNA-dependent RNA polymerase (RNAP) catalyzes the transcription of DNA into RNA using the four ribonucleoside triphosphates as substrates. Probably binds dsDNA. The protein is DNA-directed RNA polymerase subunit Rpo13 of Saccharolobus solfataricus (strain ATCC 35092 / DSM 1617 / JCM 11322 / P2) (Sulfolobus solfataricus).